A 415-amino-acid polypeptide reads, in one-letter code: MAENGDNEKMAALEAKICHQIEYYFGDFNLPRDKFLKEQIKLDEGWVPLETMIKFNRLNRLTTDFNVIVQALSKSKANLMEVSADKTKIRRSPSRPLPEVTDEYKNDVKNRSVYIKGFPTDATLDDIKEWLDDKGQILNIQMRRTLHKTFKGSIFAVFDSIQSAKKFVDTPGQKYKDTNLLILFKEDYFAKKNEERKQSKVEAKLKAKQEHEGRHKPGSTETRALEGKMGCLLKFSGDLDDQTCREDFHFLFSNHGEIKWIDFVRGAKEGIILFKEKAKDALEKARSANNGNLLLRNKKVTWKVLEGHAEKDAMKKITDDQQESLNKWKSKGGHAARRFKGSHVFTAARRFKGRGKGNRPAYAGAPKGRGQFQGRRTRFDDDDHRRGPVKRGIDGRDREEPASKHKKRENGARDK.

Residues 7–99 (NEKMAALEAK…RRSPSRPLPE (93 aa)) enclose the HTH La-type RNA-binding domain. Ser92 and Ser94 each carry phosphoserine. Positions 111-187 (RSVYIKGFPT…TNLLILFKED (77 aa)) constitute an RRM domain. Lys116 is subject to N6-acetyllysine. Thr120 carries the post-translational modification Phosphothreonine. N6-acetyllysine is present on residues Lys128 and Lys327. Positions 226–343 (EGKMGCLLKF…HAARRFKGSH (118 aa)) constitute a xRRM domain. Residues 323–415 (ESLNKWKSKG…KKRENGARDK (93 aa)) are disordered. Residues 328-341 (WKSKGGHAARRFKG) are compositionally biased toward basic residues. Position 356 is an N6-acetyllysine (Lys356). Thr377 is modified (phosphothreonine). Positions 377–415 (TRFDDDDHRRGPVKRGIDGRDREEPASKHKKRENGARDK) are enriched in basic and acidic residues.

Interacts with DDX15. May interact with RUFY1. Phosphorylated.

Its subcellular location is the nucleus. Its function is as follows. Binds to the 3' poly(U) terminus of nascent RNA polymerase III transcripts, protecting them from exonuclease digestion and facilitating their folding and maturation. The polypeptide is Lupus La protein homolog (Ssb) (Rattus norvegicus (Rat)).